A 281-amino-acid polypeptide reads, in one-letter code: Putative pyruvate, phosphate dikinase regulatory protein (281 aa).

150-157 provides a ligand contact to ADP; sequence GVSRTSKT.

The protein belongs to the pyruvate, phosphate/water dikinase regulatory protein family. PDRP subfamily.

The catalysed reaction is N(tele)-phospho-L-histidyl/L-threonyl-[pyruvate, phosphate dikinase] + ADP = N(tele)-phospho-L-histidyl/O-phospho-L-threonyl-[pyruvate, phosphate dikinase] + AMP + H(+). The enzyme catalyses N(tele)-phospho-L-histidyl/O-phospho-L-threonyl-[pyruvate, phosphate dikinase] + phosphate + H(+) = N(tele)-phospho-L-histidyl/L-threonyl-[pyruvate, phosphate dikinase] + diphosphate. Functionally, bifunctional serine/threonine kinase and phosphorylase involved in the regulation of the pyruvate, phosphate dikinase (PPDK) by catalyzing its phosphorylation/dephosphorylation. This chain is Putative pyruvate, phosphate dikinase regulatory protein, found in Sorangium cellulosum (strain So ce56) (Polyangium cellulosum (strain So ce56)).